Reading from the N-terminus, the 878-residue chain is Aconitase htyD (878 aa).

Residues glutamine 173 and 290–292 (DSH) each bind substrate. The [4Fe-4S] cluster site is built by cysteine 472, cysteine 535, and cysteine 538. Arginine 558 and arginine 563 together coordinate substrate. A disordered region spans residues 626–671 (IAIANQRTKPAPTMPAYVEPYRSFQPPVPPSSDQPQSMKDHGKTSN). 742–743 (SR) contacts substrate.

This sequence belongs to the aconitase/IPM isomerase family.

It functions in the pathway antifungal biosynthesis. Aconitase; part of the gene cluster that mediates the de novo generation of L-homotyrosine from acetyl-CoA and 4-hydroxyphenyl-pyruvate. L-homotyrosine is a building block of echinocandin B, a fungal lipidated cyclic hexapeptide that acts as an antifungal agent. L-homotyrosine 4-hydroxyphenyl-pyruvate first undergoes an aldol-type condensation by htyA with the C-2 of acetyl-CoA followed by the release of CoA to form 2-(4-hydroxybenzyl)-malate. This is followed by isomerization of 2-(4-hydroxy-benzyl)-malate to 3-(4-hydroxybenzyl)-malate by htyD. Thereafter, 3-(4-hydroxybenzyl)-malate undergoes decarboxylation and oxidation to form 2-oxo-4-(4-hydroxybenzyl)butanoic acid, coupled to reduction of NAD(+) to NADH by htyC. The product then undergoes transamination catalyzed by htyB to form L-homotyrosine. The polypeptide is Aconitase htyD (Aspergillus rugulosus (Emericella rugulosa)).